A 278-amino-acid chain; its full sequence is Extracellular metalloprotease GLRG_06511 (278 aa).

The first 19 residues, 1–19 (MQFKSLLVSALAAASTALA), serve as a signal peptide directing secretion. N-linked (GlcNAc...) asparagine glycosylation is present at N51. H190 provides a ligand contact to Zn(2+). E191 is a catalytic residue. Position 194 (H194) interacts with Zn(2+). A disulfide bridge links C227 with C254.

The protein belongs to the peptidase M43B family.

The protein localises to the secreted. Functionally, secreted metalloproteinase that allows assimilation of proteinaceous substrates. This chain is Extracellular metalloprotease GLRG_06511, found in Colletotrichum graminicola (strain M1.001 / M2 / FGSC 10212) (Maize anthracnose fungus).